Here is a 225-residue protein sequence, read N- to C-terminus: Suppressor of cytokine signaling 3 (225 aa).

Residues leucine 22–leucine 33 are kinase inhibitory region (KIR). The tract at residues valine 34–glycine 45 is extended SH2 subdomain (ESS). An SH2 domain is found at phenylalanine 46 to glutamate 142. Pro residues predominate over residues proline 131–glutamate 142. Residues proline 131–arginine 162 are disordered. Low complexity predominate over residues proline 143 to proline 155. The SOCS box domain occupies valine 177–proline 224.

In terms of assembly, interacts with multiple activated proteins of the tyrosine kinase signaling pathway including IGF1 receptor, insulin receptor and JAK2. Binding to JAK2 is mediated through the KIR and SH2 domains to a phosphorylated tyrosine residue within the JAK2 JH1 domain. Binds specific activated tyrosine residues of the leptin, EPO, IL12, GSCF and gp130 receptors. Interaction with CSNK1E stabilizes SOCS3 protein. Component of the probable ECS(SOCS3) E3 ubiquitin-protein ligase complex which contains CUL5, RNF7/RBX2, Elongin BC complex and SOCS3. Interacts with CUL5, RNF7, ELOB and ELOC. Interacts with CUL2. Interacts with FGFR3. Interacts with INSR. Interacts with BCL10; this interaction may interfere with BCL10-binding with PELI2. Interacts with NOD2 (via CARD domain); the interaction promotes NOD2 degradation. Phosphorylated on tyrosine residues after stimulation by the cytokines, IL-2, EPO or IGF1. In terms of tissue distribution, widely expressed with high expression in heart, placenta, skeletal muscle, peripheral blood leukocytes, fetal and adult lung, and fetal liver and kidney. Lower levels in thymus.

It participates in protein modification; protein ubiquitination. Functionally, SOCS family proteins form part of a classical negative feedback system that regulates cytokine signal transduction. SOCS3 is involved in negative regulation of cytokines that signal through the JAK/STAT pathway. Inhibits cytokine signal transduction by binding to tyrosine kinase receptors including IL6ST/gp130, LIF, erythropoietin, insulin, IL12, GCSF and leptin receptors. Binding to JAK2 inhibits its kinase activity and regulates IL6 signaling. Suppresses fetal liver erythropoiesis. Regulates onset and maintenance of allergic responses mediated by T-helper type 2 cells. Probable substrate recognition component of a SCF-like ECS (Elongin BC-CUL2/5-SOCS-box protein) E3 ubiquitin-protein ligase complex which mediates the ubiquitination and subsequent proteasomal degradation of target proteins. This chain is Suppressor of cytokine signaling 3, found in Homo sapiens (Human).